Consider the following 174-residue polypeptide: Pituitary tumor-transforming gene 1 protein-interacting protein (174 aa).

Residues 1–29 (MAPANLGLTPHWVMLLGAVLLLLLSGASA) form the signal peptide. Residues 30–93 (QEPPRVGCSE…RWGVCWVNFE (64 aa)) are Extracellular-facing. One can recognise a PSI domain in the interval 36–89 (GCSEYTNRSCEECLRNVSCLWCNENKACMDYPVRKILPPASLCKLSSARWGVCW). Asn42 and Asn51 each carry an N-linked (GlcNAc...) asparagine glycan. Residues 94-114 (ALIITMSVLGGSVLLGITVCC) traverse the membrane as a helical segment. Topologically, residues 115–174 (CYCCRRKKSRKPDKSDERAMREQEERRVRQEERRAEMKSRHDEIRKKYGLFKEQNPYEKF) are cytoplasmic. The disordered stretch occupies residues 125 to 155 (KPDKSDERAMREQEERRVRQEERRAEMKSRH). The segment covering 126–155 (PDKSDERAMREQEERRVRQEERRAEMKSRH) has biased composition (basic and acidic residues). Residues 127–163 (DKSDERAMREQEERRVRQEERRAEMKSRHDEIRKKYG) adopt a coiled-coil conformation. Phosphotyrosine is present on Tyr171.

As to quaternary structure, interacts with PTTG1.

Its subcellular location is the cell membrane. The protein localises to the cytoplasm. It localises to the nucleus. Functionally, may facilitate PTTG1 nuclear translocation. The chain is Pituitary tumor-transforming gene 1 protein-interacting protein (Pttg1ip) from Mus musculus (Mouse).